The following is a 421-amino-acid chain: UDP-N-acetylglucosamine 1-carboxyvinyltransferase (421 aa).

22 to 23 (KN) is a binding site for phosphoenolpyruvate. Arg-94 is a UDP-N-acetyl-alpha-D-glucosamine binding site. Catalysis depends on Cys-118, which acts as the Proton donor. Residue Cys-118 is modified to 2-(S-cysteinyl)pyruvic acid O-phosphothioketal. UDP-N-acetyl-alpha-D-glucosamine-binding positions include 123–127 (RPMDL), Asp-308, and Ile-330.

The protein belongs to the EPSP synthase family. MurA subfamily.

It localises to the cytoplasm. It carries out the reaction phosphoenolpyruvate + UDP-N-acetyl-alpha-D-glucosamine = UDP-N-acetyl-3-O-(1-carboxyvinyl)-alpha-D-glucosamine + phosphate. The protein operates within cell wall biogenesis; peptidoglycan biosynthesis. In terms of biological role, cell wall formation. Adds enolpyruvyl to UDP-N-acetylglucosamine. The polypeptide is UDP-N-acetylglucosamine 1-carboxyvinyltransferase (Ruegeria pomeroyi (strain ATCC 700808 / DSM 15171 / DSS-3) (Silicibacter pomeroyi)).